The sequence spans 110 residues: Large ribosomal subunit protein uL22 (110 aa).

Belongs to the universal ribosomal protein uL22 family. Part of the 50S ribosomal subunit.

Its function is as follows. This protein binds specifically to 23S rRNA; its binding is stimulated by other ribosomal proteins, e.g. L4, L17, and L20. It is important during the early stages of 50S assembly. It makes multiple contacts with different domains of the 23S rRNA in the assembled 50S subunit and ribosome. The globular domain of the protein is located near the polypeptide exit tunnel on the outside of the subunit, while an extended beta-hairpin is found that lines the wall of the exit tunnel in the center of the 70S ribosome. In Methylococcus capsulatus (strain ATCC 33009 / NCIMB 11132 / Bath), this protein is Large ribosomal subunit protein uL22.